Consider the following 371-residue polypeptide: Histidinol-phosphate aminotransferase (371 aa).

Residue K228 is modified to N6-(pyridoxal phosphate)lysine.

Belongs to the class-II pyridoxal-phosphate-dependent aminotransferase family. Histidinol-phosphate aminotransferase subfamily. Pyridoxal 5'-phosphate is required as a cofactor.

It catalyses the reaction L-histidinol phosphate + 2-oxoglutarate = 3-(imidazol-4-yl)-2-oxopropyl phosphate + L-glutamate. The protein operates within amino-acid biosynthesis; L-histidine biosynthesis; L-histidine from 5-phospho-alpha-D-ribose 1-diphosphate: step 7/9. The chain is Histidinol-phosphate aminotransferase from Methanococcus aeolicus (strain ATCC BAA-1280 / DSM 17508 / OCM 812 / Nankai-3).